Consider the following 463-residue polypeptide: GTPase Der (463 aa).

2 consecutive EngA-type G domains span residues proline 27–glycine 190 and arginine 200–aspartate 373. Residues glycine 33–serine 40, aspartate 80–tryptophan 84, asparagine 142–aspartate 145, glycine 206–serine 213, aspartate 253–leucine 257, and asparagine 318–aspartate 321 each bind GTP. The region spanning threonine 374–glutamate 456 is the KH-like domain.

Belongs to the TRAFAC class TrmE-Era-EngA-EngB-Septin-like GTPase superfamily. EngA (Der) GTPase family. Associates with the 50S ribosomal subunit.

GTPase that plays an essential role in the late steps of ribosome biogenesis. The protein is GTPase Der of Mycobacterium bovis (strain ATCC BAA-935 / AF2122/97).